The following is a 220-amino-acid chain: Deoxyribose-phosphate aldolase (220 aa).

Aspartate 89 functions as the Proton donor/acceptor in the catalytic mechanism. The active-site Schiff-base intermediate with acetaldehyde is lysine 151. Lysine 180 functions as the Proton donor/acceptor in the catalytic mechanism.

It belongs to the DeoC/FbaB aldolase family. DeoC type 1 subfamily.

Its subcellular location is the cytoplasm. It catalyses the reaction 2-deoxy-D-ribose 5-phosphate = D-glyceraldehyde 3-phosphate + acetaldehyde. The protein operates within carbohydrate degradation; 2-deoxy-D-ribose 1-phosphate degradation; D-glyceraldehyde 3-phosphate and acetaldehyde from 2-deoxy-alpha-D-ribose 1-phosphate: step 2/2. In terms of biological role, catalyzes a reversible aldol reaction between acetaldehyde and D-glyceraldehyde 3-phosphate to generate 2-deoxy-D-ribose 5-phosphate. The protein is Deoxyribose-phosphate aldolase of Lactococcus lactis subsp. lactis (strain IL1403) (Streptococcus lactis).